Consider the following 165-residue polypeptide: ATP synthase subunit b (165 aa).

Residues S7–I27 traverse the membrane as a helical segment.

The protein belongs to the ATPase B chain family. In terms of assembly, F-type ATPases have 2 components, F(1) - the catalytic core - and F(0) - the membrane proton channel. F(1) has five subunits: alpha(3), beta(3), gamma(1), delta(1), epsilon(1). F(0) has three main subunits: a(1), b(2) and c(10-14). The alpha and beta chains form an alternating ring which encloses part of the gamma chain. F(1) is attached to F(0) by a central stalk formed by the gamma and epsilon chains, while a peripheral stalk is formed by the delta and b chains.

It is found in the cell membrane. F(1)F(0) ATP synthase produces ATP from ADP in the presence of a proton or sodium gradient. F-type ATPases consist of two structural domains, F(1) containing the extramembraneous catalytic core and F(0) containing the membrane proton channel, linked together by a central stalk and a peripheral stalk. During catalysis, ATP synthesis in the catalytic domain of F(1) is coupled via a rotary mechanism of the central stalk subunits to proton translocation. Functionally, component of the F(0) channel, it forms part of the peripheral stalk, linking F(1) to F(0). The polypeptide is ATP synthase subunit b (Streptococcus agalactiae serotype Ia (strain ATCC 27591 / A909 / CDC SS700)).